The chain runs to 674 residues: E3 ubiquitin ligase Rnf157 (674 aa).

An RING-type zinc finger spans residues 277–316 (CVVCLSDVRDTLILPCRHLCLCNACADTLRYQASNCPICR). 2 disordered regions span residues 376–404 (LTPS…GSDI) and 433–610 (QNSS…TGRE). The span at 469-508 (TPESENLTLSSSGAIDQSSCTGTPLSPTISSPEDPLSSSL) shows a compositional bias: polar residues. A compositionally biased stretch (low complexity) spans 509 to 526 (AQSIMSMASSHSQQSQLS). Polar residues predominate over residues 527-537 (TDTVSSMSGSY). The span at 583–604 (EEMDAEGNVTEEEFASPEEDDG) shows a compositional bias: acidic residues.

The protein localises to the cytoplasm. It catalyses the reaction S-ubiquitinyl-[E2 ubiquitin-conjugating enzyme]-L-cysteine + [acceptor protein]-L-lysine = [E2 ubiquitin-conjugating enzyme]-L-cysteine + N(6)-ubiquitinyl-[acceptor protein]-L-lysine.. E3 ubiquitin ligase that ubiquitinates apbb1 for its degradation by the proteasome and thus prevents apoptosis and promotes survival of neurons. Has a dual role in neurons as it is also required for dendrite growth and maintenance for which its ligase activity is not critical. May act as a scaffold molecule to regulate this process. Acts as a downstream effector of the interconnected PI3K and MAPK signaling pathways and thus participates in the regulation of the cell cycle. This Xenopus laevis (African clawed frog) protein is E3 ubiquitin ligase Rnf157 (rnf157).